The following is a 343-amino-acid chain: Tribbles homolog 2 (343 aa).

The interval 25-50 (EELSSIRSAEPSQSFSPNLGSPSPPE) is disordered. Over residues 29-45 (SIRSAEPSQSFSPNLGS) the composition is skewed to polar residues. Positions 61-308 (IGKYLLLEPL…SQEILDHPWF (248 aa)) constitute a Protein kinase domain.

Belongs to the protein kinase superfamily. CAMK Ser/Thr protein kinase family. Tribbles subfamily. As to expression, highly expressed in the thyroid, also present in ovary and cerebrum.

The protein resides in the cytoplasm. The protein localises to the cytoskeleton. Its function is as follows. Interacts with MAPK kinases and regulates activation of MAP kinases. Does not display kinase activity. The protein is Tribbles homolog 2 of Canis lupus familiaris (Dog).